Here is a 102-residue protein sequence, read N- to C-terminus: Small ribosomal subunit protein eS24 (102 aa).

It belongs to the eukaryotic ribosomal protein eS24 family.

The sequence is that of Small ribosomal subunit protein eS24 from Halorubrum lacusprofundi (strain ATCC 49239 / DSM 5036 / JCM 8891 / ACAM 34).